We begin with the raw amino-acid sequence, 205 residues long: Large ribosomal subunit protein uL4 (205 aa).

The disordered stretch occupies residues 54–78; the sequence is GDISGTTAKPHRQKHTGRARQGSLR. Residues 62–71 show a composition bias toward basic residues; it reads KPHRQKHTGR.

This sequence belongs to the universal ribosomal protein uL4 family. Part of the 50S ribosomal subunit.

In terms of biological role, one of the primary rRNA binding proteins, this protein initially binds near the 5'-end of the 23S rRNA. It is important during the early stages of 50S assembly. It makes multiple contacts with different domains of the 23S rRNA in the assembled 50S subunit and ribosome. Forms part of the polypeptide exit tunnel. This chain is Large ribosomal subunit protein uL4, found in Ehrlichia chaffeensis (strain ATCC CRL-10679 / Arkansas).